Consider the following 616-residue polypeptide: MDEEETAEINAQEQEVAGSAGEAAAGPSGAEVQPNDDSVAVERVIDVFEETAEMEAAMIERFFGPSGEVAEEGTLPVPGPSADGEGSANAGGERPSEEDIVLDDGTESDGSYNRPGSDMSLDSPNSEDDSDVEAMPRWMIPQNRLRFAVDMMVSQARNQDGGIAALLNRDNFLQRVRSMVFSQERRRSRNSDEVSPEAEDDELPEHPPPPPPRPPIDIDMEEGVHFDTNLPAEHSYFGPNLNRVPGVNYQEVGSTHHMLIFLHQYILFPGEVLPFMIDGSLFDDDMSGLDGLIFAVAFPLMKPPEDSKKLYGVTCQIYEKGDNGRHLTFYKSRALQRIVINCSDIKGLPQYIARNPTNKCHSKVKILPEYFLPEPLKCIDMGSMSRFRDIPSMRDKYLRYQISSTPWPVEVCQEYAYEDIVERARKKLEVHKIDTMPKCPIQMSFWLVRNLHLTEKMMSQMFLTDSVNLRLQLIGGILKEETLFYCRYCNSSLAYCSDLFAMSKHGVQTQYCNPGGYIHETNTVYRVISHAIGYSGEPSTRFSWFPGYQWHIILCKFCAQHVGWEFKAVEPNLAPKMFYGLAGSSVRIGKAGDSATVNGNNFVVRNMLRVISEGME.

3 disordered regions span residues 1–39, 63–137, and 182–220; these read MDEEETAEINAQEQEVAGSAGEAAAGPSGAEVQPNDDSV, FGPS…AMPR, and SQERRRSRNSDEVSPEAEDDELPEHPPPPPPRPPIDIDM. Residues 11 to 32 are compositionally biased toward low complexity; sequence AQEQEVAGSAGEAAAGPSGAEV. Over residues 96–107 the composition is skewed to acidic residues; it reads SEEDIVLDDGTE. A compositionally biased stretch (basic and acidic residues) spans 183–192; that stretch reads QERRRSRNSD. The segment covering 194–203 has biased composition (acidic residues); it reads VSPEAEDDEL. Residues 206–215 show a composition bias toward pro residues; sequence HPPPPPPRPP. The Lon N-terminal domain maps to 257-482; sequence HMLIFLHQYI…LIGGILKEET (226 aa). The 110-residue stretch at 481 to 590 folds into the CULT domain; sequence ETLFYCRYCN…LAGSSVRIGK (110 aa). Zn(2+) is bound by residues cysteine 486, cysteine 489, cysteine 555, and cysteine 558.

The protein belongs to the CRBN family. As to quaternary structure, likely a component of a DCX (DDB1-CUL4-X-box) protein ligase complex. May interact with pic/DDB1. In terms of processing, ubiquitinated.

It localises to the nucleus. Its pathway is protein modification; protein ubiquitination. Substrate recognition component of a DCX (DDB1-CUL4-X-box) E3 protein ligase complex that mediates the ubiquitination and subsequent proteasomal degradation of target proteins. Has an essential role in mediating growth by negatively regulating insulin signaling. It also has a role in maintaining presynaptic function in the neuromuscular junction synapses of third-instar larvae. This is Protein cereblon from Drosophila pseudoobscura pseudoobscura (Fruit fly).